A 280-amino-acid polypeptide reads, in one-letter code: Putative pyruvate, phosphate dikinase regulatory protein (280 aa).

Position 152-159 (152-159 (GISRTSKT)) interacts with ADP.

It belongs to the pyruvate, phosphate/water dikinase regulatory protein family. PDRP subfamily.

It carries out the reaction N(tele)-phospho-L-histidyl/L-threonyl-[pyruvate, phosphate dikinase] + ADP = N(tele)-phospho-L-histidyl/O-phospho-L-threonyl-[pyruvate, phosphate dikinase] + AMP + H(+). The enzyme catalyses N(tele)-phospho-L-histidyl/O-phospho-L-threonyl-[pyruvate, phosphate dikinase] + phosphate + H(+) = N(tele)-phospho-L-histidyl/L-threonyl-[pyruvate, phosphate dikinase] + diphosphate. In terms of biological role, bifunctional serine/threonine kinase and phosphorylase involved in the regulation of the pyruvate, phosphate dikinase (PPDK) by catalyzing its phosphorylation/dephosphorylation. In Clostridioides difficile (strain 630) (Peptoclostridium difficile), this protein is Putative pyruvate, phosphate dikinase regulatory protein.